Consider the following 164-residue polypeptide: Phosphopantetheine adenylyltransferase (164 aa).

Substrate is bound at residue S9. Residues 9-10 (SF) and H17 each bind ATP. Residues K41, L73, and K87 each coordinate substrate. ATP-binding positions include 88–90 (GLR), E98, and 123–129 (YSYISSS).

It belongs to the bacterial CoaD family. In terms of assembly, homohexamer. It depends on Mg(2+) as a cofactor.

It localises to the cytoplasm. It carries out the reaction (R)-4'-phosphopantetheine + ATP + H(+) = 3'-dephospho-CoA + diphosphate. Its pathway is cofactor biosynthesis; coenzyme A biosynthesis; CoA from (R)-pantothenate: step 4/5. Reversibly transfers an adenylyl group from ATP to 4'-phosphopantetheine, yielding dephospho-CoA (dPCoA) and pyrophosphate. In Clostridium perfringens (strain ATCC 13124 / DSM 756 / JCM 1290 / NCIMB 6125 / NCTC 8237 / Type A), this protein is Phosphopantetheine adenylyltransferase.